The chain runs to 244 residues: Mitochondrial import inner membrane translocase subunit Tim21 (244 aa).

Residues 1–18 (MICTLLRAVRCTERLHGC) constitute a mitochondrion transit peptide. The segment at 69–89 (VRSPQSAKEDGSKQVSVHRSQ) is disordered. Residues 108-128 (FTYLIVVLIGISITGGLFYTI) form a helical membrane-spanning segment.

It belongs to the TIM21 family. As to quaternary structure, component of the TIM23 complex. Component of the MITRAC (mitochondrial translation regulation assembly intermediate of cytochrome c oxidase complex) complex, the core components of this complex being COA3/MITRAC12 and COX14. Interacts with COA3 and MT-CO1/COX1.

The protein localises to the mitochondrion membrane. Participates in the translocation of transit peptide-containing proteins across the mitochondrial inner membrane. Also required for assembly of mitochondrial respiratory chain complex I and complex IV as component of the MITRAC (mitochondrial translation regulation assembly intermediate of cytochrome c oxidase complex) complex. Probably shuttles between the presequence translocase and respiratory-chain assembly intermediates in a process that promotes incorporation of early nuclear-encoded subunits into these complexes. The polypeptide is Mitochondrial import inner membrane translocase subunit Tim21 (TIMM21) (Bos taurus (Bovine)).